The following is a 385-amino-acid chain: MSDHSPLALAQALIRCPSVTPEEGGALSFLADRLSRAGFSVERPVFSEPGTPDIQNLYARIGTAGPVLVFAGHTDVVPPGETEAWTHGPFSGEVADGFLYGRGAVDMKGGIACMLAATLAFLDRHRPDFGGSIAFLVTGDEEGPAVNGTVKLLDWAKARGERFDHCLLGEPTNPDTLGEMIKIGRRGSLTGRITVHGRQGHVAYPHRAENPIPGLLRLASALTADPLDGGTAHFDASNLEFTTIDVGNPATNVIPASAKAVFNVRFNDDWTADTLGAEIRRRLEAAAGNAVRFSLDLQPSNSPAFLTQPDAFVDRVADAIEAETGRRPALSTTGGTSDARFIKDACPVIEFGLVGRTMHETDERVAVADLDRLTAIYGRVLDAYF.

His-73 provides a ligand contact to Zn(2+). Asp-75 is an active-site residue. Asp-106 contributes to the Zn(2+) binding site. The active-site Proton acceptor is the Glu-141. 3 residues coordinate Zn(2+): Glu-142, Glu-170, and His-359.

Belongs to the peptidase M20A family. DapE subfamily. In terms of assembly, homodimer. Zn(2+) is required as a cofactor. It depends on Co(2+) as a cofactor.

It catalyses the reaction N-succinyl-(2S,6S)-2,6-diaminopimelate + H2O = (2S,6S)-2,6-diaminopimelate + succinate. Its pathway is amino-acid biosynthesis; L-lysine biosynthesis via DAP pathway; LL-2,6-diaminopimelate from (S)-tetrahydrodipicolinate (succinylase route): step 3/3. Its function is as follows. Catalyzes the hydrolysis of N-succinyl-L,L-diaminopimelic acid (SDAP), forming succinate and LL-2,6-diaminopimelate (DAP), an intermediate involved in the bacterial biosynthesis of lysine and meso-diaminopimelic acid, an essential component of bacterial cell walls. This Methylorubrum extorquens (strain CM4 / NCIMB 13688) (Methylobacterium extorquens) protein is Succinyl-diaminopimelate desuccinylase.